We begin with the raw amino-acid sequence, 269 residues long: Aquaporin-1 (269 aa).

The Cytoplasmic segment spans residues 1–11 (MASEIKKKLFW). Residues 12–29 (RAVVAEFLAMTLFVFISI) traverse the membrane as a helical segment. The Extracellular segment spans residues 30–46 (GSALGFNYPLERNQTLV). A glycan (N-linked (GlcNAc...) asparagine) is linked at asparagine 42. A helical transmembrane segment spans residues 47 to 65 (QDNVKVSLAFGLSIATLAQ). The Cytoplasmic segment spans residues 66-68 (SVG). The stretch at 69 to 82 (HISGAHLNPAVTLG) is an intramembrane region. An NPA 1 motif is present at residues 76-78 (NPA). The Cytoplasmic segment spans residues 83-90 (LLLSCQIS). Residues 91–109 (ILRAVMYIIAQCVGAIVAS) traverse the membrane as a helical segment. The Extracellular portion of the chain corresponds to 110-133 (AILSGITSSLLENSLGRNDLARGV). The chain crosses the membrane as a helical span at residues 134–153 (NSGQGLGIEIIGTLQLVLCV). The Cytoplasmic segment spans residues 154 to 163 (LATTDRRRRD). A helical membrane pass occupies residues 164 to 181 (LGGSAPLAIGLSVALGHL). The Extracellular portion of the chain corresponds to 182–186 (LAIDY). Residues 187–199 (TGCGINPARSFGS) lie within the membrane without spanning it. The short motif at 192 to 194 (NPA) is the NPA 2 element. Residues 200 to 206 (AVLTRNF) are Extracellular-facing. N-linked (GlcNAc...) asparagine glycosylation is present at asparagine 205. A helical transmembrane segment spans residues 207–224 (SNHWIFWVGPFIGSALAV). At 225 to 269 (LIYDFILAPRSSDFTDRMKVWTSGQVEEYDLDADDINSRVEMKPK) the chain is on the cytoplasmic side. A Phosphoserine modification is found at serine 247. Tyrosine 253 carries the phosphotyrosine modification. Serine 262 carries the post-translational modification Phosphoserine.

It belongs to the MIP/aquaporin (TC 1.A.8) family. Homotetramer; each monomer provides an independent water pore. Component of the ankyrin-1 complex in the erythrocyte, composed of ANK1, RHCE, RHAG, SLC4A1, EPB42, GYPA, GYPB and AQP1. Interacts with EPHB2; involved in endolymph production in the inner ear. Identified in a complex with STOM. Interacts (via the N-terminal) with ANK1 (via ANK 1-5 repeats). Interacts (via the C-terminal) with EPB42. As to expression, erythrocytes and renal tubules.

The protein resides in the cell membrane. It catalyses the reaction H2O(in) = H2O(out). It carries out the reaction nitric oxide(out) = nitric oxide(in). The catalysed reaction is CO2(out) = CO2(in). The enzyme catalyses glycerol(in) = glycerol(out). It catalyses the reaction H2O2(out) = H2O2(in). It carries out the reaction K(+)(in) = K(+)(out). The catalysed reaction is Na(+)(in) = Na(+)(out). Functionally, forms a water channel that facilitates the transport of water across cell membranes, playing a crucial role in water homeostasis in various tissues. Could also be permeable to small solutes including hydrogen peroxide, glycerol and gases such as amonnia (NH3), nitric oxide (NO) and carbon dioxide (CO2). Recruited to the ankyrin-1 complex, a multiprotein complex of the erythrocyte membrane, it could be part of a CO2 metabolon, linking facilitated diffusion of CO2 across the membrane, anion exchange of Cl(-)/HCO3(-) and interconversion of dissolved CO2 and carbonic acid in the cytosol. In vitro, it shows non-selective gated cation channel activity and may be permeable to cations like K(+) and Na(+) in vivo. The chain is Aquaporin-1 from Rattus norvegicus (Rat).